The following is a 206-amino-acid chain: Small ribosomal subunit protein uS4 (206 aa).

One can recognise an S4 RNA-binding domain in the interval 96-161 (RRLDNVVYRM…QGRIQAALAL (66 aa)).

It belongs to the universal ribosomal protein uS4 family. As to quaternary structure, part of the 30S ribosomal subunit. Contacts protein S5. The interaction surface between S4 and S5 is involved in control of translational fidelity.

Functionally, one of the primary rRNA binding proteins, it binds directly to 16S rRNA where it nucleates assembly of the body of the 30S subunit. In terms of biological role, with S5 and S12 plays an important role in translational accuracy. This chain is Small ribosomal subunit protein uS4, found in Legionella pneumophila (strain Corby).